We begin with the raw amino-acid sequence, 351 residues long: Dihydroorotate dehydrogenase (quinone) (351 aa).

Residues 67-71 (AGFDK) and threonine 91 contribute to the FMN site. Lysine 71 is a binding site for substrate. 116 to 120 (NAMGF) contributes to the substrate binding site. Residues asparagine 145 and asparagine 178 each contribute to the FMN site. Asparagine 178 contacts substrate. Serine 181 serves as the catalytic Nucleophile. Position 183 (asparagine 183) interacts with substrate. Residues lysine 214 and threonine 242 each contribute to the FMN site. Substrate is bound at residue 243 to 244 (NT). FMN contacts are provided by residues glycine 262, glycine 291, and 312–313 (YS).

The protein belongs to the dihydroorotate dehydrogenase family. Type 2 subfamily. As to quaternary structure, monomer. Requires FMN as cofactor.

It localises to the cell membrane. The catalysed reaction is (S)-dihydroorotate + a quinone = orotate + a quinol. The protein operates within pyrimidine metabolism; UMP biosynthesis via de novo pathway; orotate from (S)-dihydroorotate (quinone route): step 1/1. Catalyzes the conversion of dihydroorotate to orotate with quinone as electron acceptor. This chain is Dihydroorotate dehydrogenase (quinone) (pyrD), found in Helicobacter pylori (strain J99 / ATCC 700824) (Campylobacter pylori J99).